We begin with the raw amino-acid sequence, 603 residues long: Elongation factor 4 (603 aa).

In terms of domain architecture, tr-type G spans 2–184; sequence NHIRNFSIIA…AVVARMPPPR (183 aa). GTP-binding positions include 14-19 and 131-134; these read DHGKST and NKMD.

Belongs to the TRAFAC class translation factor GTPase superfamily. Classic translation factor GTPase family. LepA subfamily.

The protein localises to the cell inner membrane. It catalyses the reaction GTP + H2O = GDP + phosphate + H(+). Its function is as follows. Required for accurate and efficient protein synthesis under certain stress conditions. May act as a fidelity factor of the translation reaction, by catalyzing a one-codon backward translocation of tRNAs on improperly translocated ribosomes. Back-translocation proceeds from a post-translocation (POST) complex to a pre-translocation (PRE) complex, thus giving elongation factor G a second chance to translocate the tRNAs correctly. Binds to ribosomes in a GTP-dependent manner. The protein is Elongation factor 4 of Albidiferax ferrireducens (strain ATCC BAA-621 / DSM 15236 / T118) (Rhodoferax ferrireducens).